The sequence spans 158 residues: Transcriptional repressor NrdR (158 aa).

A zinc finger spans residues 3–34; sequence CPYCGFEESKVVDSRSTEDHKAIRRRRECLKC. In terms of domain architecture, ATP-cone spans 49-139; it reads VLVIKRDSNR…VYRQFKDINT (91 aa).

It belongs to the NrdR family. The cofactor is Zn(2+).

Its function is as follows. Negatively regulates transcription of bacterial ribonucleotide reductase nrd genes and operons by binding to NrdR-boxes. The polypeptide is Transcriptional repressor NrdR (Clostridium novyi (strain NT)).